A 416-amino-acid polypeptide reads, in one-letter code: S-adenosylmethionine synthase (416 aa).

His-14 serves as a coordination point for ATP. Asp-16 lines the Mg(2+) pocket. A K(+)-binding site is contributed by Glu-42. L-methionine is bound by residues Glu-55 and Gln-98. Positions 98-108 (QSPDIARGVDT) are flexible loop. ATP-binding positions include 173–175 (DGK), 249–250 (KF), Asp-258, 264–265 (RK), Ala-281, and Lys-285. Asp-258 is a binding site for L-methionine. Position 289 (Lys-289) interacts with L-methionine.

The protein belongs to the AdoMet synthase family. As to quaternary structure, homotetramer; dimer of dimers. Mg(2+) serves as cofactor. Requires K(+) as cofactor.

The protein localises to the cytoplasm. It catalyses the reaction L-methionine + ATP + H2O = S-adenosyl-L-methionine + phosphate + diphosphate. It participates in amino-acid biosynthesis; S-adenosyl-L-methionine biosynthesis; S-adenosyl-L-methionine from L-methionine: step 1/1. In terms of biological role, catalyzes the formation of S-adenosylmethionine (AdoMet) from methionine and ATP. The overall synthetic reaction is composed of two sequential steps, AdoMet formation and the subsequent tripolyphosphate hydrolysis which occurs prior to release of AdoMet from the enzyme. This is S-adenosylmethionine synthase from Thermosynechococcus vestitus (strain NIES-2133 / IAM M-273 / BP-1).